Consider the following 111-residue polypeptide: Ribonuclease P protein component (111 aa).

Belongs to the RnpA family. Consists of a catalytic RNA component (M1 or rnpB) and a protein subunit.

It carries out the reaction Endonucleolytic cleavage of RNA, removing 5'-extranucleotides from tRNA precursor.. Its function is as follows. RNaseP catalyzes the removal of the 5'-leader sequence from pre-tRNA to produce the mature 5'-terminus. It can also cleave other RNA substrates such as 4.5S RNA. The protein component plays an auxiliary but essential role in vivo by binding to the 5'-leader sequence and broadening the substrate specificity of the ribozyme. In Alkaliphilus metalliredigens (strain QYMF), this protein is Ribonuclease P protein component.